Consider the following 229-residue polypeptide: Protein FMP52-2, mitochondrial (229 aa).

A mitochondrion-targeting transit peptide spans 1–45; it reads MAAGAFILGSTGLCGYQMLRFAEKSSLFDKISTVGRKLPDFKSEK.

It belongs to the FMP52 family.

It localises to the mitochondrion outer membrane. The protein is Protein FMP52-2, mitochondrial (FMP522) of Scheffersomyces stipitis (strain ATCC 58785 / CBS 6054 / NBRC 10063 / NRRL Y-11545) (Yeast).